Reading from the N-terminus, the 239-residue chain is Transmembrane ascorbate ferrireductase 1 (239 aa).

Topologically, residues 1-7 (MAVRINA) are cytoplasmic. Residues 8–28 (MAVTFVAHALAVIAAIMVLVW) traverse the membrane as a helical segment. The Cytochrome b561 domain maps to 13 to 216 (VAHALAVIAA…FGAFVVLTAS (204 aa)). At 29–45 (SISYRGGLAWEATNKNL) the chain is on the lumenal side. Residues 46-66 (IFNLHPVLMLIGFIILGGEAI) traverse the membrane as a helical segment. Residue His50 participates in heme b binding. Topologically, residues 67–81 (ISYKSLPLEKPVKKL) are cytoplasmic. The chain crosses the membrane as a helical span at residues 82 to 102 (IHLILHAIALALGIFGICAAF). Heme b is bound by residues His83 and His117. Over 103–119 (KNHNESHIPNLYSLHSW) the chain is Lumenal. A helical membrane pass occupies residues 120-140 (IGIGVISLYGFQWVYSFIVFF). The Cytoplasmic portion of the chain corresponds to 141 to 155 (FPGGSTNLKSGLLPW). Residue His156 participates in heme b binding. A helical membrane pass occupies residues 156–176 (HAMLGLFVYILAVGNAALGFL). Residues 177–193 (EKLTFLENGGLDKYGSE) lie on the Lumenal side of the membrane. Residues 194–214 (AFLINFTAIITILFGAFVVLT) traverse the membrane as a helical segment. Residues 215-239 (ASAESPSPSPSVSNDDSVDFSYSAI) lie on the Cytoplasmic side of the membrane. Residues 217–239 (AESPSPSPSVSNDDSVDFSYSAI) form a disordered region. Residues 224-239 (PSVSNDDSVDFSYSAI) are compositionally biased toward low complexity.

Homodimer. Heme b serves as cofactor. Expressed in roots, seedlings and leaves. Lower expression in flowers. Expressed in the L1 layer of the shoot apex, in the epidermis of leaf primordia and young leaves and in vascular bundles. In the differentiation zone of the root, detected in the pericycle and in the epidermis, but not in the cortex. Strongly expressed in the lateral part of the root cap and in the epidermis of the root tip, but not in the meristematic tissue. Not expressed in lateral roots. In mature embryos, expressed in the epidermis, cotyledon tips and root tips.

It is found in the vacuole membrane. It carries out the reaction Fe(3+)(out) + L-ascorbate(in) = monodehydro-L-ascorbate radical(in) + Fe(2+)(out) + H(+). Its function is as follows. Two-heme-containing cytochrome. Catalyzes ascorbate-dependent trans-membrane ferric-chelate reduction. Able to use dihydrolipoic acid (DHLA) as an alternative substrate to ascorbate. The chain is Transmembrane ascorbate ferrireductase 1 (CYB561A) from Arabidopsis thaliana (Mouse-ear cress).